Here is a 444-residue protein sequence, read N- to C-terminus: MIETSQTIPELVSWAKDREFSLNLPTERLVFLLAIAIYNNERLDGEMLEADLVDIFRHTMNAFEQSTDAIATRANNAINELVKQRLLNRFSSEFTEGLAIYRLTPLGVGVSDYYIRQREFSALRLSVQLSIVADEIQRASDSAEEGVENNESEHYWRRNVFAPLKYSVAEIFDSIDLSQRIMDENQQSIKNEIAELLTKDWQAAISSCERLLDETSGNLRELQDTLNAAGDKLQAQLLRIQDCVIGRDDLYFIDQLITDLQSKLDRIISWGQQAIDLWIGYDRHVHKFIRTAIDMDKNRVFSQRLRNSIHHYFDHPWFLWTAQAERLVDLRDEEMVLREDDALGELPEELQYESLSDLHDQIVEHMQGLLIAYRENNRPIDLSLVLKEQLENYPLSRHFDVARIIVDQAVRLGMANDDLSGIYPDWQAINKRGAEVQAHVIDKY.

Residues 212 to 240 form a leucine-zipper region; sequence LDETSGNLRELQDTLNAAGDKLQAQLLRI.

It belongs to the MukF family. Interacts, and probably forms a ternary complex, with MukE and MukB via its C-terminal region. The complex formation is stimulated by calcium or magnesium. It is required for an interaction between MukE and MukB.

The protein localises to the cytoplasm. It is found in the nucleoid. Involved in chromosome condensation, segregation and cell cycle progression. May participate in facilitating chromosome segregation by condensation DNA from both sides of a centrally located replisome during cell division. Not required for mini-F plasmid partitioning. Probably acts via its interaction with MukB and MukE. Overexpression results in anucleate cells. It has a calcium binding activity. This is Chromosome partition protein MukF from Haemophilus influenzae (strain PittGG).